We begin with the raw amino-acid sequence, 124 residues long: Histone H2B, embryonic (124 aa).

A disordered region spans residues 1–31; sequence MAPTAQVAKKGSKKAVKGTKTAXGGKKRNRK. Serine 111 carries O-linked (GlcNAc) serine glycosylation. A Glycyl lysine isopeptide (Lys-Gly) (interchain with G-Cter in ubiquitin) cross-link involves residue lysine 119.

Belongs to the histone H2B family. The nucleosome is a histone octamer containing two molecules each of H2A, H2B, H3 and H4 assembled in one H3-H4 heterotetramer and two H2A-H2B heterodimers. The octamer wraps approximately 147 bp of DNA. Post-translationally, monoubiquitination of Lys-119 gives a specific tag for epigenetic transcriptional activation and is also prerequisite for histone H3 'Lys-4' and 'Lys-79' methylation. GlcNAcylation at Ser-111 promotes monoubiquitination of Lys-119. It fluctuates in response to extracellular glucose, and associates with transcribed genes.

The protein resides in the nucleus. The protein localises to the chromosome. Core component of nucleosome. Nucleosomes wrap and compact DNA into chromatin, limiting DNA accessibility to the cellular machineries which require DNA as a template. Histones thereby play a central role in transcription regulation, DNA repair, DNA replication and chromosomal stability. DNA accessibility is regulated via a complex set of post-translational modifications of histones, also called histone code, and nucleosome remodeling. The chain is Histone H2B, embryonic from Strongylocentrotus purpuratus (Purple sea urchin).